The following is a 95-amino-acid chain: Co-chaperonin GroES (95 aa).

This sequence belongs to the GroES chaperonin family. Heptamer of 7 subunits arranged in a ring. Interacts with the chaperonin GroEL.

It is found in the cytoplasm. Its function is as follows. Together with the chaperonin GroEL, plays an essential role in assisting protein folding. The GroEL-GroES system forms a nano-cage that allows encapsulation of the non-native substrate proteins and provides a physical environment optimized to promote and accelerate protein folding. GroES binds to the apical surface of the GroEL ring, thereby capping the opening of the GroEL channel. The protein is Co-chaperonin GroES of Nitratidesulfovibrio vulgaris (strain ATCC 29579 / DSM 644 / CCUG 34227 / NCIMB 8303 / VKM B-1760 / Hildenborough) (Desulfovibrio vulgaris).